The primary structure comprises 895 residues: Probable methyltransferase PMT27 (895 aa).

Residues 1–16 (MAFGRGRGNKRTSTSS) lie on the Cytoplasmic side of the membrane. A helical; Signal-anchor for type II membrane protein membrane pass occupies residues 17–37 (YASTITMVIFVALCVFGVWML). Topologically, residues 38-895 (SSNSVIPPQI…KGFWRPETSQ (858 aa)) are lumenal. Residues 43-52 (IPPQITQGST) show a composition bias toward polar residues. The interval 43–362 (IPPQITQGST…QRQTSESNTV (320 aa)) is disordered. Residues 90-114 (NPGKLPDDAVKSEDEQRKSAKEKSE) show a composition bias toward basic and acidic residues. Low complexity predominate over residues 115–127 (TTSSKTQTQETQQ). Residues 129–143 (NDDKISEEKEKDNGK) are compositionally biased toward basic and acidic residues. N-linked (GlcNAc...) asparagine glycosylation occurs at N145. Residues 154–174 (GQMKKVVKEFEKEQKQQRDED) are compositionally biased toward basic and acidic residues. Residues 176 to 191 (GTQPKGTQGQEQGQGK) show a composition bias toward low complexity. Polar residues-rich tracts occupy residues 199–232 (GNKQ…GETS) and 243–256 (PEEQ…TGQQ). The segment covering 257-320 (NEEKTTASEE…RKDEKKHEQG (64 aa)) has biased composition (basic and acidic residues). A compositionally biased stretch (polar residues) spans 337 to 346 (SQKSWKSQAT). N375 and N709 each carry an N-linked (GlcNAc...) asparagine glycan.

It belongs to the methyltransferase superfamily.

Its subcellular location is the endoplasmic reticulum membrane. This Arabidopsis thaliana (Mouse-ear cress) protein is Probable methyltransferase PMT27.